A 231-amino-acid polypeptide reads, in one-letter code: Enolase-phosphatase E1 (231 aa).

This sequence belongs to the HAD-like hydrolase superfamily. MasA/MtnC family. Monomer. Mg(2+) is required as a cofactor.

The catalysed reaction is 5-methylsulfanyl-2,3-dioxopentyl phosphate + H2O = 1,2-dihydroxy-5-(methylsulfanyl)pent-1-en-3-one + phosphate. Its pathway is amino-acid biosynthesis; L-methionine biosynthesis via salvage pathway; L-methionine from S-methyl-5-thio-alpha-D-ribose 1-phosphate: step 3/6. It participates in amino-acid biosynthesis; L-methionine biosynthesis via salvage pathway; L-methionine from S-methyl-5-thio-alpha-D-ribose 1-phosphate: step 4/6. Its function is as follows. Bifunctional enzyme that catalyzes the enolization of 2,3-diketo-5-methylthiopentyl-1-phosphate (DK-MTP-1-P) into the intermediate 2-hydroxy-3-keto-5-methylthiopentenyl-1-phosphate (HK-MTPenyl-1-P), which is then dephosphorylated to form the acireductone 1,2-dihydroxy-3-keto-5-methylthiopentene (DHK-MTPene). The protein is Enolase-phosphatase E1 of Granulibacter bethesdensis (strain ATCC BAA-1260 / CGDNIH1).